A 313-amino-acid chain; its full sequence is tRNA uridine(34) hydroxylase (313 aa).

Residues 127–225 enclose the Rhodanese domain; the sequence is SDPDTILIDT…YLETVPEEES (99 aa). Residue C185 is the Cysteine persulfide intermediate of the active site.

The protein belongs to the TrhO family.

The catalysed reaction is uridine(34) in tRNA + AH2 + O2 = 5-hydroxyuridine(34) in tRNA + A + H2O. Catalyzes oxygen-dependent 5-hydroxyuridine (ho5U) modification at position 34 in tRNAs. This Gluconobacter oxydans (strain 621H) (Gluconobacter suboxydans) protein is tRNA uridine(34) hydroxylase.